Consider the following 1934-residue polypeptide: Myosin-7 (1934 aa).

Residues 31–80 form the Myosin N-terminal SH3-like domain; that stretch reads DLKKDVFVPDDKEEFVKAKIVSREGGKVTAETENGKTVTVKEDQVMQQNP. The Myosin motor domain maps to 84 to 777; sequence DKIEDMAMLT…LLGLLEEMRD (694 aa). N6,N6,N6-trimethyllysine is present on Lys128. Position 177–184 (177–184) interacts with ATP; it reads GESGAGKT. Thr377 is modified (phosphothreonine). Actin-binding stretches follow at residues 654–676 and 756–770; these read LNKL…IPNE and KFGH…GLLG. Residues 780–809 enclose the IQ domain; the sequence is LSRIITRIQAQSRGLLSRMEFKKLLERRDS. Positions 839-1934 form a coiled coil; it reads LKSAETEKEM…DIGAKGLNEE (1096 aa). Phosphoserine is present on residues Ser1136 and Ser1268. Residue Thr1281 is modified to Phosphothreonine. Tyr1307 carries the post-translational modification Phosphotyrosine. Thr1308 carries the post-translational modification Phosphothreonine. Ser1509 carries the phosphoserine modification. Phosphothreonine is present on Thr1512. Residues 1914 to 1934 are disordered; sequence SQVNKLRAKSRDIGAKGLNEE. The segment covering 1922–1934 has biased composition (basic and acidic residues); it reads KSRDIGAKGLNEE.

This sequence belongs to the TRAFAC class myosin-kinesin ATPase superfamily. Myosin family. Muscle myosin is a hexameric protein that consists of 2 heavy chain subunits (MHC), 2 alkali light chain subunits (MLC) and 2 regulatory light chain subunits (MLC-2). Interacts with ECPAS. Interacts (via C-terminus) with LRRC39.

The protein localises to the cytoplasm. It localises to the myofibril. It is found in the sarcomere. Its function is as follows. Myosins are actin-based motor molecules with ATPase activity essential for muscle contraction. Forms regular bipolar thick filaments that, together with actin thin filaments, constitute the fundamental contractile unit of skeletal and cardiac muscle. This Mesocricetus auratus (Golden hamster) protein is Myosin-7 (MYH7).